Reading from the N-terminus, the 343-residue chain is GTPase Obg (343 aa).

The Obg domain occupies 1-159 (MKFIDEVKIQ…FELRLELRVL (159 aa)). The region spanning 160–334 (ADVGLLGLPN…LIYAIMGHLQ (175 aa)) is the OBG-type G domain. Residues 166–173 (GLPNAGKS), 191–195 (FTTLY), 213–216 (DIPG), 284–287 (NKVD), and 315–317 (SAL) each bind GTP. 2 residues coordinate Mg(2+): Ser173 and Thr193.

The protein belongs to the TRAFAC class OBG-HflX-like GTPase superfamily. OBG GTPase family. In terms of assembly, monomer. The cofactor is Mg(2+).

Its subcellular location is the cytoplasm. Its function is as follows. An essential GTPase which binds GTP, GDP and possibly (p)ppGpp with moderate affinity, with high nucleotide exchange rates and a fairly low GTP hydrolysis rate. Plays a role in control of the cell cycle, stress response, ribosome biogenesis and in those bacteria that undergo differentiation, in morphogenesis control. This chain is GTPase Obg, found in Nitrosomonas europaea (strain ATCC 19718 / CIP 103999 / KCTC 2705 / NBRC 14298).